The sequence spans 372 residues: L-selectin (372 aa).

The first 28 residues, 1–28 (MIFPRKCQSTQRDLWNIFKLWGWTMLCC), serve as a signal peptide directing secretion. A propeptide spanning residues 29–38 (DFLAHHGTDC) is cleaved from the precursor. Over 39–332 (WTYHYSENPM…FSMIKEGDYN (294 aa)) the chain is Extracellular. A C-type lectin domain is found at 55 to 155 (RFCRENYTDL…ACHKPKAALC (101 aa)). Cystine bridges form between C57–C155, C128–C147, C128–C160, C160–C171, C165–C180, C182–C191, C197–C241, C227–C254, C259–C303, and C289–C316. Residues N60 and N104 are each glycosylated (N-linked (GlcNAc...) asparagine). Ca(2+) is bound by residues E118, N120, E126, N143, and D144. Positions 156–192 (YTASCQPWSCSGHGECVEIINNYTCNCDVGYYGPQCQ) constitute an EGF-like domain. N177 carries N-linked (GlcNAc...) asparagine glycosylation. Sushi domains lie at 195–256 (IQCE…TCQV) and 257–318 (IQCE…ICQK). 4 N-linked (GlcNAc...) asparagine glycosylation sites follow: N226, N232, N246, and N271. The chain crosses the membrane as a helical span at residues 333–355 (PLFIPVAVIVTAFSGLAFIIWLA). At 356 to 372 (RRLKKGKKSKKSMDDPY) the chain is on the cytoplasmic side.

The protein belongs to the selectin/LECAM family. As to quaternary structure, interaction with SELPLG/PSGL1 and PODXL2 is required for promoting recruitment and rolling of leukocytes. This interaction is dependent on the sialyl Lewis X glycan modification of SELPLG and PODXL2, and tyrosine sulfation modifications of SELPLG. Sulfation on 'Tyr-51' of SELPLG is important for L-selectin binding. In terms of processing, N-glycosylated.

It is found in the cell membrane. Calcium-dependent lectin that mediates cell adhesion by binding to glycoproteins on neighboring cells. Mediates the adherence of lymphocytes to endothelial cells of high endothelial venules in peripheral lymph nodes. Promotes initial tethering and rolling of leukocytes in endothelia. This is L-selectin (SELL) from Papio hamadryas (Hamadryas baboon).